Reading from the N-terminus, the 722-residue chain is Homeobox-leucine zipper protein HDG11 (722 aa).

Residues 1-19 (MSFVVGVGGSGSGSGGDGG) are compositionally biased toward gly residues. A disordered region spans residues 1-42 (MSFVVGVGGSGSGSGGDGGGSHHHDGSETDRKKKRYHRHTAQ). A compositionally biased stretch (basic and acidic residues) spans 20–31 (GSHHHDGSETDR). The segment at residues 32–91 (KKKRYHRHTAQQIQRLESSFKECPHPDEKQRNQLSRELGLAPRQIKFWFQNRRTQLKAQH) is a DNA-binding region (homeobox). Residues 81–161 (QNRRTQLKAQ…LERMSTIASK (81 aa)) are a coiled coil. The region spanning 227–460 (SDMDKPIMTG…LQRMCERFAS (234 aa)) is the START domain.

The protein belongs to the HD-ZIP homeobox family. Class IV subfamily. Interacts with BBM. As to expression, expressed in apical meristems and young epidermal tissue including trichomes and stipules. Expressed in lateral root tips, the L1 layer of apical inflorescence meristems and early flower primordia, carpel and petal epidermis, stigma papillae, ovule primordia, nucellus and embryo.

The protein resides in the nucleus. Transcription factor which acts as a positive regulator of drought stress tolerance. Can transactivate CIPK3, NCED3 and ERECTA. Transactivates several cell-wall-loosening protein genes by directly binding to HD motifs in their promoters. These target genes play important roles in coordinating cell-wall extensibility with root development and growth. Transactivates CYP74A/AOS, AOC3, OPR3 and 4CLL5/OPCL1 genes by directly binding to HD motifs in their promoters. These target genes are involved in jasmonate (JA) biosynthesis, and JA signaling affects root architecture by activating auxin signaling, which promotes lateral root formation. Acts as a negative regulator of trichome branching. Required for the establishment of giant cell identity on the abaxial side of sepals. Seems to promote cell differentiation. May regulate cell differentiation and proliferation during root and shoot meristem development. The sequence is that of Homeobox-leucine zipper protein HDG11 from Arabidopsis thaliana (Mouse-ear cress).